A 23-amino-acid chain; its full sequence is NLLQFNKMIKVETGKNAIPFYAF.

It belongs to the phospholipase A2 family. Group II subfamily. Ca(2+) is required as a cofactor. Contains 7 disulfide bonds. In terms of tissue distribution, expressed by the venom gland.

Its subcellular location is the secreted. It catalyses the reaction a 1,2-diacyl-sn-glycero-3-phosphocholine + H2O = a 1-acyl-sn-glycero-3-phosphocholine + a fatty acid + H(+). In terms of biological role, snake venom phospholipase A2 (PLA2) that shows presynaptic neurotoxicity and low myotoxicity. PLA2 catalyzes the calcium-dependent hydrolysis of the 2-acyl groups in 3-sn-phosphoglycerides. In Gloydius intermedius (Central Asian pit viper), this protein is Basic phospholipase A2 intermexin.